Reading from the N-terminus, the 115-residue chain is V-type proton ATPase subunit G (115 aa).

It belongs to the V-ATPase G subunit family. In terms of assembly, V-ATPase is a heteromultimeric enzyme composed of a peripheral catalytic V1 complex (components A to H) attached to an integral membrane V0 proton pore complex (components: a, c, c', c'', d, e, f and VOA1).

The protein localises to the vacuole membrane. Subunit of the V1 complex of vacuolar(H+)-ATPase (V-ATPase), a multisubunit enzyme composed of a peripheral complex (V1) that hydrolyzes ATP and a membrane integral complex (V0) that translocates protons. V-ATPase is responsible for acidifying and maintaining the pH of intracellular compartments. The protein is V-type proton ATPase subunit G (vma-10) of Neurospora crassa (strain ATCC 24698 / 74-OR23-1A / CBS 708.71 / DSM 1257 / FGSC 987).